The primary structure comprises 340 residues: MNAPHMHDTAADGAAIEATVADIADTGRRALTRREQKEAYENNKLFKRIVRQVGQAIGDYNMIEQGDKVMVCLSGGKDSYAMLDVLLRLRERAPIDFDIVAVNLDQKQPGFPEHVLPEYLTQIGVPFHIENQDTYSIVKRLVPEGKTTCSLCSRLRRGILYRVAGELGATKIALGHHRDDILQTLLLNMFYGGKLKGMPPKLQSDDGKNVVIRPLAYVKETDLEKFAELREFPIIPCNLCGSQPNLKRAEMKALIRDWDKRFPGRVDNMFSALANVVPSHLMDTTQFPFASLRATGQADPQGDIAFDEEPCASGDDTAATRDGARPIAARPISIVQFDDL.

The short motif at 74 to 79 (SGGKDS) is the PP-loop motif element. Positions 149, 152, and 240 each coordinate [4Fe-4S] cluster.

The protein belongs to the TtcA family. In terms of assembly, homodimer. It depends on Mg(2+) as a cofactor. The cofactor is [4Fe-4S] cluster.

The protein resides in the cytoplasm. The catalysed reaction is cytidine(32) in tRNA + S-sulfanyl-L-cysteinyl-[cysteine desulfurase] + AH2 + ATP = 2-thiocytidine(32) in tRNA + L-cysteinyl-[cysteine desulfurase] + A + AMP + diphosphate + H(+). It participates in tRNA modification. Its function is as follows. Catalyzes the ATP-dependent 2-thiolation of cytidine in position 32 of tRNA, to form 2-thiocytidine (s(2)C32). The sulfur atoms are provided by the cysteine/cysteine desulfurase (IscS) system. This chain is tRNA-cytidine(32) 2-sulfurtransferase, found in Burkholderia ambifaria (strain MC40-6).